A 160-amino-acid chain; its full sequence is Leucokinin (160 aa).

An N-terminal signal peptide occupies residues M1 to G19. The propeptide occupies A20 to E130. G147 bears the Glycine amide mark. Positions S151–Y160 are excised as a propeptide.

It localises to the secreted. Its function is as follows. Acts through intracellular calcium in Malpighian tubule stellate cells to raise chloride conductance. This Drosophila melanogaster (Fruit fly) protein is Leucokinin (Lk).